The following is a 98-amino-acid chain: Class II hydrophobin 5 (98 aa).

An N-terminal signal peptide occupies residues 1-17 (MQFSLALVTLLATAVSA). Disulfide bonds link Cys30-Cys78, Cys39-Cys69, Cys40-Cys52, and Cys79-Cys90.

This sequence belongs to the cerato-ulmin hydrophobin family.

The protein localises to the secreted. It is found in the cell wall. Aerial growth, conidiation, and dispersal of filamentous fungi in the environment rely upon a capability of their secreting small amphipathic proteins called hydrophobins (HPBs) with low sequence identity. Class I can self-assemble into an outermost layer of rodlet bundles on aerial cell surfaces, conferring cellular hydrophobicity that supports fungal growth, development and dispersal; whereas Class II form highly ordered films at water-air interfaces through intermolecular interactions but contribute nothing to the rodlet structure. Does not seem to be important for the ability to cause seedling disease. This Gibberella moniliformis (Maize ear and stalk rot fungus) protein is Class II hydrophobin 5.